A 281-amino-acid polypeptide reads, in one-letter code: MSTTWFVGADWLAEHIDDPEIQIIDARMASPGQEDRNVAQEYLNGHIPGAVFFDIEALSDHTSPLPHMLPRPETFAVAMRELGVNQDKHLIVYDEGNLFSAPRAWWMLRTFGVEKVSILGGGLAGWQRDDLLLEEGAVELPEGEFNAAFNPEAVVKVTDVLLASHENTAQIIDARPAARFNAEVDEPRPGLRRGHIPGALNVPWTELVREGELKTTDELDAIFFGRGVSYDKPIIVSCGSGVTAAVVLLALATLDVPNVKLYDGAWSEWGARADLPVEPLK.

Rhodanese domains are found at residues 17–135 (DDPE…LLEE) and 165–278 (HENT…LPVE). Arg-179 lines the substrate pocket. The active-site Cysteine persulfide intermediate is the Cys-238. Residues 238-244 (CGSGVTA) form a substrate specificity region.

Its subcellular location is the cytoplasm. The enzyme catalyses 2-oxo-3-sulfanylpropanoate + [thioredoxin]-dithiol = [thioredoxin]-disulfide + hydrogen sulfide + pyruvate + H(+). Functionally, catalyzes the transfer of sulfur from 3-mercaptopyruvate to a thiol-containing acceptor to form an intramolecular disulfide releasing hydrogen sulfide and pyruvate. The polypeptide is 3-mercaptopyruvate sulfurtransferase (sseA) (Escherichia coli O157:H7).